The primary structure comprises 72 residues: UPF0154 protein Bcer98_2334 (72 aa).

A helical membrane pass occupies residues 3–23 (IWSGILVGVVALLAGVALGFF).

This sequence belongs to the UPF0154 family.

Its subcellular location is the cell membrane. The protein is UPF0154 protein Bcer98_2334 of Bacillus cytotoxicus (strain DSM 22905 / CIP 110041 / 391-98 / NVH 391-98).